The following is a 275-amino-acid chain: 2,3,4,5-tetrahydropyridine-2,6-dicarboxylate N-succinyltransferase (275 aa).

The substrate site is built by arginine 106 and aspartate 143.

The protein belongs to the transferase hexapeptide repeat family. Homotrimer.

The protein localises to the cytoplasm. The enzyme catalyses (S)-2,3,4,5-tetrahydrodipicolinate + succinyl-CoA + H2O = (S)-2-succinylamino-6-oxoheptanedioate + CoA. The protein operates within amino-acid biosynthesis; L-lysine biosynthesis via DAP pathway; LL-2,6-diaminopimelate from (S)-tetrahydrodipicolinate (succinylase route): step 1/3. This Paraburkholderia xenovorans (strain LB400) protein is 2,3,4,5-tetrahydropyridine-2,6-dicarboxylate N-succinyltransferase.